We begin with the raw amino-acid sequence, 354 residues long: DNA integrity scanning protein DisA (354 aa).

Residues 6-144 (DDELKKILKI…GDIKYVLRDS (139 aa)) enclose the DAC domain. Residues Gly-73, Leu-91, and 104-108 (TRHRT) each bind ATP.

This sequence belongs to the DisA family. In terms of assembly, homooctamer. It depends on Mg(2+) as a cofactor.

The catalysed reaction is 2 ATP = 3',3'-c-di-AMP + 2 diphosphate. In terms of biological role, participates in a DNA-damage check-point that is active prior to asymmetric division when DNA is damaged. DisA forms globular foci that rapidly scan along the chromosomes during sporulation, searching for lesions. When a lesion is present, DisA pauses at the lesion site. This triggers a cellular response that culminates in a temporary block in sporulation initiation. Functionally, also has diadenylate cyclase activity, catalyzing the condensation of 2 ATP molecules into cyclic di-AMP (c-di-AMP). c-di-AMP acts as a signaling molecule that couples DNA integrity with progression of sporulation. The rise in c-di-AMP level generated by DisA while scanning the chromosome, operates as a positive signal that advances sporulation; upon encountering a lesion, the DisA focus arrests at the damaged site and halts c-di-AMP synthesis. This chain is DNA integrity scanning protein DisA, found in Clostridium perfringens (strain SM101 / Type A).